Here is a 673-residue protein sequence, read N- to C-terminus: Cell division cycle protein 23 homolog (673 aa).

10 TPR repeats span residues 86-120 (AEMWTNEILAHLPDKWCAPNTLNLYNQVSELVLDN), 159-195 (NKEFRRAAFFLEKTMNGNKLDHFLHFRCLFLAYYQEH), 232-267 (EDVWFEYLMGLLEVELGLKDLAEKSFRNVVIREPRI), 332-365 (PMIITKIAACSNARHDHDQAISNFEDVRKADPYR), 400-433 (WETCCIVANYHAIRRDSEHAIKFFQRALRLNPGL), 434-467 (AALWVLIGHEFMEMKNNAAACVSYRRAIEIDPAD), 469-501 (RGWYGLGQMYDIMKMPAYALFYYQEAQKCKPHD), 502-535 (SRLLVALGDIYSKLNRIEDAEKCFTGAYLFGDVE), 539-572 (LWSLAKLHERYSDDNKAAQAFEVFLVVYELVTSA), and 577-610 (IYAIAFLANHFFKIEDFDKASEYATKCLAFETLC). Residues 628–673 (SRLPVEEAPGPSNASAAGGQEAMDTEEAPQEGGEEEMSEGEDDFSF) are disordered. Positions 635–646 (APGPSNASAAGG) are enriched in low complexity. A compositionally biased stretch (acidic residues) spans 650–673 (MDTEEAPQEGGEEEMSEGEDDFSF).

It belongs to the APC8/CDC23 family. The APC/C complex is probably composed of at least 12 subunits: apc-2, apc-10, apc-11, cdc-26, emb-1, emb-27, emb-30, mat-1, mat-2, mat-3, such-1 and gfi-3.

It functions in the pathway protein modification; protein ubiquitination. In terms of biological role, probable component of the anaphase promoting complex/cyclosome (APC/C), a cell cycle-regulated E3 ubiquitin ligase that controls progression through mitosis and the G1 phase of the cell cycle. The APC/C complex acts by mediating ubiquitination and subsequent degradation of target proteins. Developmental role in early embryogenesis and the metaphase to anaphase transition in oocyte and spermatocyte meiosis and mitosis in germ cells. Required for embryonic anterior-posterior axis formation. Plays a role in regulating the abundance of glr-1 receptors in postmitotic neurons, which may in turn control animal locomotion. Involved in regulating GABA neurotransmitter release at neuromuscular junctions in GABA motor neurons. The protein is Cell division cycle protein 23 homolog of Caenorhabditis elegans.